Consider the following 145-residue polypeptide: Transcription antitermination protein NusB (145 aa).

This sequence belongs to the NusB family.

Involved in transcription antitermination. Required for transcription of ribosomal RNA (rRNA) genes. Binds specifically to the boxA antiterminator sequence of the ribosomal RNA (rrn) operons. In Burkholderia vietnamiensis (strain G4 / LMG 22486) (Burkholderia cepacia (strain R1808)), this protein is Transcription antitermination protein NusB.